Reading from the N-terminus, the 501-residue chain is Large ribosomal subunit protein uL2m (501 aa).

2 disordered regions span residues 187–217 (GRER…APRR) and 459–501 (AMNP…KRRN). Polar residues predominate over residues 198–213 (NTFSQSEGQRWKTQSG). The span at 464–474 (DHPHGGGEGRT) shows a compositional bias: basic and acidic residues.

The protein belongs to the universal ribosomal protein uL2 family.

It localises to the mitochondrion. This Marchantia polymorpha (Common liverwort) protein is Large ribosomal subunit protein uL2m (RPL2).